We begin with the raw amino-acid sequence, 734 residues long: Subtilisin-like protease SBT3.2 (734 aa).

The signal sequence occupies residues 1-19 (MTRALILVAICLMLTLNNA). Residues 20-88 (AETKVHIVYL…ESTLRFYELQ (69 aa)) constitute a propeptide, activation peptide. The Peptidase S8 domain occupies 92–581 (TWDYLQHTSK…GGVVNSEKAA (490 aa)). N108 carries N-linked (GlcNAc...) asparagine glycosylation. D122 serves as the catalytic Charge relay system. An N-linked (GlcNAc...) asparagine glycan is attached at N143. The Charge relay system role is filled by H179. N-linked (GlcNAc...) asparagine glycans are attached at residues N326 and N355. The region spanning 361 to 438 (VCEDLAKNPA…ELGTDILFYI (78 aa)) is the PA domain. An N-linked (GlcNAc...) asparagine glycan is attached at N497. S512 functions as the Charge relay system in the catalytic mechanism. N669 is a glycosylation site (N-linked (GlcNAc...) asparagine).

It belongs to the peptidase S8 family.

It localises to the secreted. The sequence is that of Subtilisin-like protease SBT3.2 from Arabidopsis thaliana (Mouse-ear cress).